A 204-amino-acid polypeptide reads, in one-letter code: Recombination protein RecR (204 aa).

The segment at 58 to 75 (CSICQNITDLGTDPCLLC) adopts a C4-type zinc-finger fold. Residues 83 to 181 (SVICVVESPT…NVTRIARGIP (99 aa)) form the Toprim domain.

It belongs to the RecR family.

May play a role in DNA repair. It seems to be involved in an RecBC-independent recombinational process of DNA repair. It may act with RecF and RecO. The chain is Recombination protein RecR from Chlorobaculum parvum (strain DSM 263 / NCIMB 8327) (Chlorobium vibrioforme subsp. thiosulfatophilum).